Reading from the N-terminus, the 126-residue chain is Fluoride-specific ion channel FluC (126 aa).

Transmembrane regions (helical) follow at residues 35–55 (WWTLSVNIVGSLAMGLLIGLL), 71–91 (VGMLGGFTTFSSFSMEFWLLF), and 101–121 (LYVVASVVGALLACGAGMILI). Positions 75 and 78 each coordinate Na(+).

Belongs to the fluoride channel Fluc/FEX (TC 1.A.43) family.

The protein resides in the cell inner membrane. It carries out the reaction fluoride(in) = fluoride(out). With respect to regulation, na(+) is not transported, but it plays an essential structural role and its presence is essential for fluoride channel function. Fluoride-specific ion channel. Important for reducing fluoride concentration in the cell, thus reducing its toxicity. The polypeptide is Fluoride-specific ion channel FluC (Sphingopyxis alaskensis (strain DSM 13593 / LMG 18877 / RB2256) (Sphingomonas alaskensis)).